Here is a 22-residue protein sequence, read N- to C-terminus: Melittin-related peptide FQ-22-1 (22 aa).

Q22 is modified (glutamine amide).

As to expression, expressed by the skin glands.

The protein resides in the secreted. The chain is Melittin-related peptide FQ-22-1 from Rana arvalis (Moor frog).